Here is a 231-residue protein sequence, read N- to C-terminus: Large ribosomal subunit protein uL1 (231 aa).

Belongs to the universal ribosomal protein uL1 family. In terms of assembly, part of the 50S ribosomal subunit.

Functionally, binds directly to 23S rRNA. The L1 stalk is quite mobile in the ribosome, and is involved in E site tRNA release. Its function is as follows. Protein L1 is also a translational repressor protein, it controls the translation of the L11 operon by binding to its mRNA. The sequence is that of Large ribosomal subunit protein uL1 from Buchnera aphidicola subsp. Acyrthosiphon pisum (strain 5A).